The sequence spans 228 residues: ATP-dependent dethiobiotin synthetase BioD (228 aa).

Position 14–19 (14–19 (DAGKTL)) interacts with ATP. Thr18 contributes to the Mg(2+) binding site. Lys39 is a catalytic residue. ATP is bound by residues Asp56, 117–120 (EGAG), and 206–208 (PRL). The Mg(2+) site is built by Asp56 and Glu117.

Belongs to the dethiobiotin synthetase family. As to quaternary structure, homodimer. Mg(2+) serves as cofactor.

It localises to the cytoplasm. It catalyses the reaction (7R,8S)-7,8-diammoniononanoate + CO2 + ATP = (4R,5S)-dethiobiotin + ADP + phosphate + 3 H(+). It participates in cofactor biosynthesis; biotin biosynthesis; biotin from 7,8-diaminononanoate: step 1/2. Functionally, catalyzes a mechanistically unusual reaction, the ATP-dependent insertion of CO2 between the N7 and N8 nitrogen atoms of 7,8-diaminopelargonic acid (DAPA, also called 7,8-diammoniononanoate) to form a ureido ring. The polypeptide is ATP-dependent dethiobiotin synthetase BioD (Cellvibrio japonicus (strain Ueda107) (Pseudomonas fluorescens subsp. cellulosa)).